Consider the following 147-residue polypeptide: Small ribosomal subunit protein uS12 (147 aa).

It belongs to the universal ribosomal protein uS12 family. Part of the 30S ribosomal subunit.

Functionally, with S4 and S5 plays an important role in translational accuracy. Located at the interface of the 30S and 50S subunits. The protein is Small ribosomal subunit protein uS12 of Pyrococcus abyssi (strain GE5 / Orsay).